The primary structure comprises 424 residues: S-phase kinase-associated protein 2 (424 aa).

Residues 1 to 220 (MHRKHLQEIP…LSLEGLRLSD (220 aa)) form a mediates interaction with hepatitis C virus non-structural protein NS5A region. A disordered region spans residues 39 to 73 (SALEKEEPDSENIPQELLSNLGHPESPPRKRLKSK). Ser64 is subject to Phosphoserine. A Nuclear localization signal motif is present at residues 67–73 (RKRLKSK). Lys68 and Lys71 each carry N6-acetyllysine; by p300/EP300. A phosphoserine mark is found at Ser72 and Ser75. Residues 94 to 140 (GVSWDSLPDELLLGIFSCLCLPELLKVSGVCKRWYRLASDESLWQTL) form the F-box domain. LRR repeat units follow at residues 151-176 (VTGRLLSQGVIAFRCPRSFMDQPLAE), 177-204 (HFSPFRVQHMDLSNSVIEVSTLHGILSQ), 210-234 (NLSLEGLRLSDPIVNTLAKNSNLVR), 235-257 (LNLSGCSGFSEFALQTLLSSCSR), 258-284 (LDELNLSWCFDFTEKHVQVAVAHVSET), 286-308 (TQLNLSGYRKNLQKSDLSTLVRR), 309-330 (CPNLVHLDLSDSVMLKNDCFQE), 334-356 (LNYLQHLSLSRCYDIIPETLLEL), 359-378 (IPTLKTLQVFGIVPDGTLQL), and 380-401 (KEALPHLQINCSHFTTIARPTI). Phosphoserine is present on Ser179. A mediates interaction with IFI27 region spans residues 402–424 (GNKKNQEIWGIKCRLTLQKPSCL).

Part of a SCF(SKP2) complex consisting of CUL1, RBX1, SKP1 and SKP2. Component of a SCF(SKP2)-like complex containing CUL1, SKP1, TRIM21 and SKP2. Interacts directly with CUL1 and SKP1. Interacts with CKS1. Interacts with ASB2 which is the substrate-recognition component of a probable ECS E3 ubiquitin-protein ligase complex; ASB2 is likely to bridge the formation of dimeric E3-ubiquitin-protein ligase complexes composed of an ECS complex and an SCF(SKP2) complex. Interacts with the cyclin-A-CDK2 complex. Interacts with ORC1, phosphorylated CDT1, phosphorylated RBL2, ELF4, phosphorylated RAG2, FOXO1, UBP43, MYC, TOB1, TAL1 and KMT2A/MLL1. Interacts with TRIM21. Interacts with cyclin-E. Interacts with IFI27; promotes the ubiquitin-mediated proteasomal degradation of hepatitis C virus/HCV non-structural protein NS5A. Interacts with CARM1. In terms of assembly, (Microbial infection) Interacts with hepatitis C virus/HCV non-structural protein NS5A; promotes the ubiquitin-mediated proteasomal degradation of NS5A. Post-translationally, phosphorylated on serine and threonine resudues in response to DNA damage, promoting 'Lys-63'-linked ubiquitination of NBN. Ubiquitinated by the APC/C complex, leading to its degradation by the proteasome. Deubiquitinated by USP13. In terms of processing, acetylation at Lys-68 and Lys-71 increases stability through impairment of APC/C-mediated proteolysis and promotes cytoplasmic retention. Deacetylated by SIRT3.

The protein resides in the cytoplasm. It is found in the nucleus. The protein operates within protein modification; protein ubiquitination. In terms of biological role, substrate recognition component of a SCF (SKP1-CUL1-F-box protein) E3 ubiquitin-protein ligase complex which mediates the ubiquitination and subsequent proteasomal degradation of target proteins involved in cell cycle progression, signal transduction and transcription. Specifically recognizes phosphorylated CDKN1B/p27kip and is involved in regulation of G1/S transition. Degradation of CDKN1B/p27kip also requires CKS1. Recognizes target proteins ORC1, CDT1, RBL2, KMT2A/MLL1, CDK9, RAG2, NBN, FOXO1, UBP43, YTHDF2, and probably MYC, TOB1 and TAL1. Degradation of TAL1 also requires STUB1. Recognizes CDKN1A in association with CCNE1 or CCNE2 and CDK2. Promotes ubiquitination and destruction of CDH1 in a CK1-dependent manner, thereby regulating cell migration. Following phosphorylation in response to DNA damage, mediates 'Lys-63'-linked ubiquitination of NBN, promoting ATM recruitment to DNA damage sites and DNA repair via homologous recombination. Its function is as follows. Through the ubiquitin-mediated proteasomal degradation of hepatitis C virus non-structural protein 5A, has an antiviral activity towards that virus. In Homo sapiens (Human), this protein is S-phase kinase-associated protein 2 (SKP2).